The primary structure comprises 347 residues: Probable dual-specificity RNA methyltransferase RlmN (347 aa).

The active-site Proton acceptor is glutamate 94. One can recognise a Radical SAM core domain in the interval threonine 100–aspartate 334. Cysteines 107 and 339 form a disulfide. [4Fe-4S] cluster-binding residues include cysteine 114, cysteine 118, and cysteine 121. S-adenosyl-L-methionine contacts are provided by residues glycine 165–glutamate 166, serine 197, serine 220–histidine 222, and asparagine 296. Cysteine 339 (S-methylcysteine intermediate) is an active-site residue.

The protein belongs to the radical SAM superfamily. RlmN family. Requires [4Fe-4S] cluster as cofactor.

The protein resides in the cytoplasm. The enzyme catalyses adenosine(2503) in 23S rRNA + 2 reduced [2Fe-2S]-[ferredoxin] + 2 S-adenosyl-L-methionine = 2-methyladenosine(2503) in 23S rRNA + 5'-deoxyadenosine + L-methionine + 2 oxidized [2Fe-2S]-[ferredoxin] + S-adenosyl-L-homocysteine. It carries out the reaction adenosine(37) in tRNA + 2 reduced [2Fe-2S]-[ferredoxin] + 2 S-adenosyl-L-methionine = 2-methyladenosine(37) in tRNA + 5'-deoxyadenosine + L-methionine + 2 oxidized [2Fe-2S]-[ferredoxin] + S-adenosyl-L-homocysteine. Functionally, specifically methylates position 2 of adenine 2503 in 23S rRNA and position 2 of adenine 37 in tRNAs. The protein is Probable dual-specificity RNA methyltransferase RlmN of Flavobacterium psychrophilum (strain ATCC 49511 / DSM 21280 / CIP 103535 / JIP02/86).